Consider the following 348-residue polypeptide: Methylthioribose-1-phosphate isomerase (348 aa).

Substrate is bound by residues 53 to 55 (RGA), Arg-93, and Gln-197. The active-site Proton donor is the Asp-238. 248 to 249 (NK) is a substrate binding site.

The protein belongs to the eIF-2B alpha/beta/delta subunits family. MtnA subfamily.

It catalyses the reaction 5-(methylsulfanyl)-alpha-D-ribose 1-phosphate = 5-(methylsulfanyl)-D-ribulose 1-phosphate. It functions in the pathway amino-acid biosynthesis; L-methionine biosynthesis via salvage pathway; L-methionine from S-methyl-5-thio-alpha-D-ribose 1-phosphate: step 1/6. Its function is as follows. Catalyzes the interconversion of methylthioribose-1-phosphate (MTR-1-P) into methylthioribulose-1-phosphate (MTRu-1-P). The sequence is that of Methylthioribose-1-phosphate isomerase from Gloeobacter violaceus (strain ATCC 29082 / PCC 7421).